The chain runs to 228 residues: 3,4-dihydroxy-2-butanone 4-phosphate synthase (228 aa).

D-ribulose 5-phosphate contacts are provided by residues 37–38 (RE), aspartate 42, 150–154 (RPGHT), and glutamate 174. Glutamate 38 is a Mg(2+) binding site. Position 153 (histidine 153) interacts with Mg(2+).

This sequence belongs to the DHBP synthase family. In terms of assembly, homodimer. It depends on Mg(2+) as a cofactor. Requires Mn(2+) as cofactor.

The enzyme catalyses D-ribulose 5-phosphate = (2S)-2-hydroxy-3-oxobutyl phosphate + formate + H(+). It participates in cofactor biosynthesis; riboflavin biosynthesis; 2-hydroxy-3-oxobutyl phosphate from D-ribulose 5-phosphate: step 1/1. Its function is as follows. Catalyzes the conversion of D-ribulose 5-phosphate to formate and 3,4-dihydroxy-2-butanone 4-phosphate. This chain is 3,4-dihydroxy-2-butanone 4-phosphate synthase, found in Chloroherpeton thalassium (strain ATCC 35110 / GB-78).